The chain runs to 334 residues: MHQNLITRWLFISCIMVILMIIIGGITRLTGAGLSIVEWSPVTGLLPPFSFESWQVEFAKYKAFPEYQSVNYDITLSQFKFIYLLEFIHRLLGRITTLIYIVPLICFYFQGVIKKCKMLPYIIALLLFCIQGFMGWYMVESGLLNNHSVSHFRLAFHLIIAVIIYHILFYQLIKNYCDLLLIPSQKLLLIFSCISITVIYIQIFLGALVAGLDAGLVYNNFPLMGDNFIPIEIQDNLFNLTNLYDPVFMQFMHRLGGFSVFAVNAILVICLFKVKHLQLTKIAYFLIIVLLIQIATGIITIVYSVPIIIASIHQFVAIILLSIIIWCYFLFKNS.

5 helical membrane-spanning segments follow: residues 6 to 26 (ITRW…IGGI), 93 to 113 (GRIT…QGVI), 119 to 139 (LPYI…WYMV), 154 to 174 (LAFH…QLIK), and 189 to 209 (LIFS…GALV). Residue His-253 participates in heme binding. A run of 3 helical transmembrane segments spans residues 255-275 (LGGF…FKVK), 282-302 (IAYF…ITIV), and 305-325 (VPII…SIII). His-313 is a binding site for heme.

The protein belongs to the COX15/CtaA family. Type 2 subfamily. In terms of assembly, interacts with CtaB. Heme b serves as cofactor.

It is found in the cell membrane. It catalyses the reaction Fe(II)-heme o + 2 A + H2O = Fe(II)-heme a + 2 AH2. Its pathway is porphyrin-containing compound metabolism; heme A biosynthesis; heme A from heme O: step 1/1. Catalyzes the conversion of heme O to heme A by two successive hydroxylations of the methyl group at C8. The first hydroxylation forms heme I, the second hydroxylation results in an unstable dihydroxymethyl group, which spontaneously dehydrates, resulting in the formyl group of heme A. The chain is Heme A synthase from Rickettsia prowazekii (strain Madrid E).